A 1198-amino-acid chain; its full sequence is Regulator of G-protein signaling 3 (1198 aa).

The region spanning 137–256 (GAGQLRLSID…TPDKEISGWY (120 aa)) is the C2 domain. The 78-residue stretch at 299-376 (KITIPRGKDG…EIILLVWRMV (78 aa)) folds into the PDZ domain. The residue at position 448 (Arg-448) is an Omega-N-methylarginine. The disordered stretch occupies residues 669-933 (QQLAASPPDS…GAEGGLSLRV (265 aa)). A Phosphoserine modification is found at Ser-674. Residues 679 to 697 (KMFETEADEKREMALEEGK) are compositionally biased toward basic and acidic residues. The segment covering 739-751 (EPLSSKDSATSEG) has biased composition (polar residues). The span at 753 to 773 (PPGPDAPPSKDVPPCQEPPPA) shows a compositional bias: pro residues. Acidic residues predominate over residues 877-906 (GDEEDAEEAEEVEEGEEGEEDEDEDTSDDN). A compositionally biased stretch (basic and acidic residues) spans 907–917 (YGERSEAKRSS). Phosphoserine is present on residues Ser-943, Ser-946, Ser-978, and Ser-1007. 2 disordered regions span residues 1007–1026 (SGAD…KSKN) and 1032–1056 (KNKL…ADKM). The RGS domain occupies 1073-1198 (SLEKLLVHKY…INQKKMSPPL (126 aa)).

In terms of assembly, binds EFNB1 and EFNB2. Binds the GNB1-GNG2 heterodimer. Phosphorylated by cyclic GMP-dependent protein kinase. Post-translationally, ISGylated.

It localises to the cytoplasm. Its subcellular location is the nucleus. It is found in the cell membrane. In terms of biological role, down-regulates signaling from heterotrimeric G-proteins by increasing the GTPase activity of the alpha subunits, thereby driving them into their inactive GDP-bound form. Down-regulates G-protein-mediated release of inositol phosphates and activation of MAP kinases. The protein is Regulator of G-protein signaling 3 (RGS3) of Homo sapiens (Human).